The chain runs to 66 residues: KEGYIVNYYDGCKYPCVKLGDNDYCLRECRLRYYKSAGGYCYAFACWCTHLYEQAVVWPLPNKTCL.

Residues 1-66 (KEGYIVNYYD…VWPLPNKTCL (66 aa)) enclose the LCN-type CS-alpha/beta domain. 4 disulfide bridges follow: Cys12–Cys65, Cys16–Cys41, Cys25–Cys46, and Cys29–Cys48.

It belongs to the long (4 C-C) scorpion toxin superfamily. Sodium channel inhibitor family. Beta subfamily. As to expression, expressed by the venom gland.

It localises to the secreted. In terms of biological role, beta toxins bind voltage-independently at site-4 of sodium channels (Nav) and reduces peak current and shifts the voltage of activation toward more negative potentials thereby affecting sodium channel activation and promoting spontaneous and repetitive firing. Has an inhibitory effect on voltage-gated sodium channels hNav1.1/SCN1A, hNav1.2/SCN2A, hNav1.4/SCN4A and hNav1.6/SCN8A. Reduces the peak current of hNav1.5/SCN5A but does not shift its voltage of activation. Also affects the inactivation processes of hNav1.1/SCN1A, hNav1.4/SCN4A, hNav1.5/SCN5A and hNav1.6/SCN8A. This toxin is active against mammals and lethal to mice. This is Beta-toxin Cb3 from Centruroides baergi (Scorpion).